We begin with the raw amino-acid sequence, 234 residues long: Ribosomal RNA small subunit methyltransferase G (234 aa).

S-adenosyl-L-methionine contacts are provided by residues Gly74, Phe79, 125 to 126, and Arg144; that span reads AE.

Belongs to the methyltransferase superfamily. RNA methyltransferase RsmG family.

The protein resides in the cytoplasm. Functionally, specifically methylates the N7 position of a guanine in 16S rRNA. This chain is Ribosomal RNA small subunit methyltransferase G, found in Roseiflexus sp. (strain RS-1).